A 489-amino-acid polypeptide reads, in one-letter code: Betaine aldehyde dehydrogenase (489 aa).

K(+) is bound by residues T26 and D93. Residue 150 to 152 (GAW) participates in NAD(+) binding. K162 functions as the Charge relay system in the catalytic mechanism. 176 to 179 (KPSE) provides a ligand contact to NAD(+). V180 contributes to the K(+) binding site. Residue 229–232 (GVET) coordinates NAD(+). L245 contributes to the K(+) binding site. Residue E251 is the Proton acceptor of the active site. NAD(+)-binding residues include G253, C285, and E386. C285 serves as the catalytic Nucleophile. C285 is subject to Cysteine sulfenic acid (-SOH). Positions 456 and 459 each coordinate K(+). E463 serves as the catalytic Charge relay system.

This sequence belongs to the aldehyde dehydrogenase family. Dimer of dimers. K(+) is required as a cofactor.

The enzyme catalyses betaine aldehyde + NAD(+) + H2O = glycine betaine + NADH + 2 H(+). It participates in amine and polyamine biosynthesis; betaine biosynthesis via choline pathway; betaine from betaine aldehyde: step 1/1. In terms of biological role, involved in the biosynthesis of the osmoprotectant glycine betaine. Catalyzes the irreversible oxidation of betaine aldehyde to the corresponding acid. This chain is Betaine aldehyde dehydrogenase, found in Burkholderia pseudomallei (strain 668).